The chain runs to 248 residues: FCS-Like Zinc finger 14 (248 aa).

Polar residues predominate over residues 85–94 (VCRSEPNQPG). The tract at residues 85-108 (VCRSEPNQPGRSDPVQFMSHGGST) is disordered. The FLZ-type zinc finger occupies 181–224 (GFLNSCYLCRKKLHGQDIFIYRGEKAFCSTECRSSHIANDERKE).

Belongs to the FLZ family. In terms of assembly, interacts with KIN10 and KIN11 via its FLZ-type zinc finger domain. Interacts with KINB1, KINB2 and KINB3 via its N-terminal part.

Its subcellular location is the cytoplasm. It localises to the nucleus. May act as an adapter to facilitate the interaction of SnRK1 complex with effector proteins, conferring tissue- and stimulus-type specific differences in the SnRK1 regulation pathway. This is FCS-Like Zinc finger 14 from Arabidopsis thaliana (Mouse-ear cress).